The chain runs to 251 residues: MSDSNLDEVLVLIPARMASTRLPGKPLADICGLPMIVQVAMRAKEAAIGRVVVAVDDQQVFDAVSAAGFDVVMTSSDHQSGSDRIFEALTKVDPDGKAKFIVNVQGDLPTIDPQTVRAALRPLENEAVDIGTLTTEIDDEDDKTAPHIVKIVGSPVSDTRLHALYFTRATAPHGKGPLYHHIGLYAYRRAALERFVSLGPSTLERRESLEQLRALEAGMRIDVEIVDTVPLGVDTPADLEKARRILSARTG.

This sequence belongs to the KdsB family.

The protein resides in the cytoplasm. It carries out the reaction 3-deoxy-alpha-D-manno-oct-2-ulosonate + CTP = CMP-3-deoxy-beta-D-manno-octulosonate + diphosphate. The protein operates within nucleotide-sugar biosynthesis; CMP-3-deoxy-D-manno-octulosonate biosynthesis; CMP-3-deoxy-D-manno-octulosonate from 3-deoxy-D-manno-octulosonate and CTP: step 1/1. It functions in the pathway bacterial outer membrane biogenesis; lipopolysaccharide biosynthesis. Functionally, activates KDO (a required 8-carbon sugar) for incorporation into bacterial lipopolysaccharide in Gram-negative bacteria. This Rhizobium etli (strain CIAT 652) protein is 3-deoxy-manno-octulosonate cytidylyltransferase.